The chain runs to 442 residues: Chromosomal replication initiator protein DnaA (442 aa).

The segment at 1–75 (MDAWPRCLER…GNGEVALAVG (75 aa)) is domain I, interacts with DnaA modulators. The domain II stretch occupies residues 75–104 (GSRPRAPEPAPAPVAATIAPQAAPIAPFAG). The segment at 105 to 322 (NLDSHYTFAN…GALNTLVARA (218 aa)) is domain III, AAA+ region. Residues G150, G152, K153, and T154 each coordinate ATP. A domain IV, binds dsDNA region spans residues 323 to 442 (NFTGRSITVE…WEKLIRKLSE (120 aa)).

Belongs to the DnaA family. In terms of assembly, oligomerizes as a right-handed, spiral filament on DNA at oriC.

Its subcellular location is the cytoplasm. Functionally, plays an essential role in the initiation and regulation of chromosomal replication. ATP-DnaA binds to the origin of replication (oriC) to initiate formation of the DNA replication initiation complex once per cell cycle. Binds the DnaA box (a 9 base pair repeat at the origin) and separates the double-stranded (ds)DNA. Forms a right-handed helical filament on oriC DNA; dsDNA binds to the exterior of the filament while single-stranded (ss)DNA is stabiized in the filament's interior. The ATP-DnaA-oriC complex binds and stabilizes one strand of the AT-rich DNA unwinding element (DUE), permitting loading of DNA polymerase. After initiation quickly degrades to an ADP-DnaA complex that is not apt for DNA replication. Binds acidic phospholipids. The polypeptide is Chromosomal replication initiator protein DnaA (Xanthomonas oryzae pv. oryzae (strain PXO99A)).